A 668-amino-acid polypeptide reads, in one-letter code: Kinesin-like protein KIF2B (668 aa).

The residue at position 125 (Thr125) is a Phosphothreonine; by PLK1. Residues 149 to 177 adopt a coiled-coil conformation; it reads CLREIEKLQKQREKRRRLQLEIRARRALD. Ser204 is modified (phosphoserine; by PLK1). A Kinesin motor domain is found at 213–543; that stretch reads RICVCVRKRP…LRYANRVKEL (331 aa). 303–310 lines the ATP pocket; that stretch reads GQTGSGKT. Residues 585–604 are compositionally biased toward basic and acidic residues; it reads PTVEKEEEKESDELTSKKEP. A disordered region spans residues 585 to 605; sequence PTVEKEEEKESDELTSKKEPA. A coiled-coil region spans residues 646 to 667; it reads VLTDIQKKLQSLREDLQKKSQV.

The protein belongs to the TRAFAC class myosin-kinesin ATPase superfamily. Kinesin family. MCAK/KIF2 subfamily. Phosphorylation at Thr-125 by PLK1 is required for activity in the correction of kinetochore-microtubules attachment errors, while phosphorylation at Ser-204 also by PLK1 is required for the kinetochore localization and activity in prometaphase.

It localises to the cytoplasm. It is found in the cytoskeleton. Its subcellular location is the microtubule organizing center. The protein localises to the centrosome. The protein resides in the spindle. It localises to the chromosome. It is found in the centromere. Its subcellular location is the kinetochore. Its function is as follows. Plus end-directed microtubule-dependent motor required for spindle assembly and chromosome movement during mitosis. Has microtubule depolymerization activity. Plays a role in chromosome congression. The chain is Kinesin-like protein KIF2B (Kif2b) from Mus musculus (Mouse).